Here is a 437-residue protein sequence, read N- to C-terminus: 3-phosphoshikimate 1-carboxyvinyltransferase (437 aa).

Positions 21, 22, and 26 each coordinate 3-phosphoshikimate. Phosphoenolpyruvate is bound at residue lysine 21. Glycine 101 and arginine 129 together coordinate phosphoenolpyruvate. The 3-phosphoshikimate site is built by serine 172, serine 173, glutamine 174, serine 200, aspartate 314, and lysine 341. Residue glutamine 174 participates in phosphoenolpyruvate binding. Aspartate 314 functions as the Proton acceptor in the catalytic mechanism. Phosphoenolpyruvate-binding residues include arginine 345, arginine 388, and lysine 414.

The protein belongs to the EPSP synthase family. As to quaternary structure, monomer.

It is found in the cytoplasm. The catalysed reaction is 3-phosphoshikimate + phosphoenolpyruvate = 5-O-(1-carboxyvinyl)-3-phosphoshikimate + phosphate. It participates in metabolic intermediate biosynthesis; chorismate biosynthesis; chorismate from D-erythrose 4-phosphate and phosphoenolpyruvate: step 6/7. In terms of biological role, catalyzes the transfer of the enolpyruvyl moiety of phosphoenolpyruvate (PEP) to the 5-hydroxyl of shikimate-3-phosphate (S3P) to produce enolpyruvyl shikimate-3-phosphate and inorganic phosphate. The chain is 3-phosphoshikimate 1-carboxyvinyltransferase from Clostridioides difficile (strain 630) (Peptoclostridium difficile).